A 115-amino-acid chain; its full sequence is MADTLLKCTTRHVRLFTAALQEEDLVPSDDQLTLDLDPDNEFLWDAASLAKVQGRFKELVDAAAGGELSDYTLRRIGTDLEGFIRQLLQAGELSYNPDGRVQNFSMGLPRTPELL.

The protein belongs to the complex I NdhM subunit family. NDH-1 can be composed of about 15 different subunits; different subcomplexes with different compositions have been identified which probably have different functions.

The protein localises to the cellular thylakoid membrane. The catalysed reaction is a plastoquinone + NADH + (n+1) H(+)(in) = a plastoquinol + NAD(+) + n H(+)(out). It catalyses the reaction a plastoquinone + NADPH + (n+1) H(+)(in) = a plastoquinol + NADP(+) + n H(+)(out). In terms of biological role, NDH-1 shuttles electrons from an unknown electron donor, via FMN and iron-sulfur (Fe-S) centers, to quinones in the respiratory and/or the photosynthetic chain. The immediate electron acceptor for the enzyme in this species is believed to be plastoquinone. Couples the redox reaction to proton translocation, and thus conserves the redox energy in a proton gradient. Cyanobacterial NDH-1 also plays a role in inorganic carbon-concentration. The sequence is that of NAD(P)H-quinone oxidoreductase subunit M from Synechococcus sp. (strain CC9605).